Here is a 606-residue protein sequence, read N- to C-terminus: Probable translation initiation factor IF-2 (606 aa).

The region spanning 11-230 is the tr-type G domain; the sequence is IRQPIVVVLG…LTGLVQRFMK (220 aa). The tract at residues 20-27 is G1; it reads GHVDHGKT. 20-27 provides a ligand contact to GTP; that stretch reads GHVDHGKT. Residues 45–49 form a G2 region; that stretch reads EITQH. The segment at 85 to 88 is G3; the sequence is DTPG. Residues 85 to 89 and 139 to 142 contribute to the GTP site; these read DTPGH and NKID. Residues 139–142 form a G4 region; that stretch reads NKID. The segment at 207–209 is G5; sequence SAK.

The protein belongs to the TRAFAC class translation factor GTPase superfamily. Classic translation factor GTPase family. IF-2 subfamily.

Function in general translation initiation by promoting the binding of the formylmethionine-tRNA to ribosomes. Seems to function along with eIF-2. The polypeptide is Probable translation initiation factor IF-2 (Staphylothermus marinus (strain ATCC 43588 / DSM 3639 / JCM 9404 / F1)).